The chain runs to 124 residues: MIQTILAVSIAGIAGTLLRFATGTWVSANWPRYFYAATLAVNIVGCLIIGVLYGLFLLRPEVPIEIRAGLIVGFVGGLTTFSSFSLDTLRLLESGQVPLALGYAGISVFGGLLATWAGLSLTRL.

A run of 4 helical transmembrane segments spans residues 5-25, 38-58, 69-89, and 99-119; these read ILAV…TGTW, TLAV…LFLL, GLIV…LDTL, and LALG…WAGL. Residues Gly-76 and Thr-79 each contribute to the Na(+) site.

It belongs to the fluoride channel Fluc/FEX (TC 1.A.43) family.

Its subcellular location is the cell inner membrane. The catalysed reaction is fluoride(in) = fluoride(out). Its activity is regulated as follows. Na(+) is not transported, but it plays an essential structural role and its presence is essential for fluoride channel function. Functionally, fluoride-specific ion channel. Important for reducing fluoride concentration in the cell, thus reducing its toxicity. This is Fluoride-specific ion channel FluC from Pseudomonas syringae pv. syringae (strain B728a).